The chain runs to 378 residues: MAMWRAPSAAGQLLGRALASTAAQTSAGSKKVVGVFYKGGEYADKNPNFVGCVDSALGIRGWLESKGHRYIVTDDKEGINCELEKHIEDAHVLITTPFHPAYITAERIKKAKNLELLLTAGVGSDHIDLPAAAAAGLTVAEITGSNTVSVAEDQLMRILLLLRNFLPGHHQIVNGEWNVAGIAHRTYDLEGKTVGTVGAGRIGRLLLQRLKPFNCNLMYHDRVKIDPELEKEIGAKYEEDLDAMLPKCDVVVINMPLTEKTRGMFNKERIAKMKKGVTIVNNARGAIMDTQAVADACASGHVAGYGGDVWFPQPAPKDHPWRYMPNHAMTPHCSGTTIDGQLRYAAGVKDMLDRYFKGEDFPAQNYIVKAGQLASQYQ.

The N-terminal 18 residues, 1–18 (MAMWRAPSAAGQLLGRAL), are a transit peptide targeting the mitochondrion. 2 residues coordinate substrate: Val122 and Asn146. Residues Thr147, 201–202 (RI), Asp221, 256–260 (PLTEK), Asn282, Asp308, and 332–335 (HCSG) contribute to the NAD(+) site.

This sequence belongs to the D-isomer specific 2-hydroxyacid dehydrogenase family. FDH subfamily. As to quaternary structure, homodimer.

It is found in the mitochondrion. It carries out the reaction formate + NAD(+) = CO2 + NADH. Its function is as follows. Catalyzes the NAD(+)-dependent oxidation of formate to carbon dioxide. Involved in the cell stress response. In Oryza sativa subsp. japonica (Rice), this protein is Formate dehydrogenase 2, mitochondrial.